Here is a 159-residue protein sequence, read N- to C-terminus: Small ribosomal subunit protein uS7c (159 aa).

The protein belongs to the universal ribosomal protein uS7 family. Part of the 30S ribosomal subunit.

It localises to the plastid. The protein localises to the chloroplast. One of the primary rRNA binding proteins, it binds directly to 16S rRNA where it nucleates assembly of the head domain of the 30S subunit. The polypeptide is Small ribosomal subunit protein uS7c (rps7) (Bigelowiella natans (Pedinomonas minutissima)).